A 504-amino-acid polypeptide reads, in one-letter code: ATP synthase subunit beta (504 aa).

The disordered stretch occupies residues 1-23 (MAKAATPKETAAAKKPAAPKKAA). 182–189 (GGAGVGKT) serves as a coordination point for ATP.

Belongs to the ATPase alpha/beta chains family. In terms of assembly, F-type ATPases have 2 components, CF(1) - the catalytic core - and CF(0) - the membrane proton channel. CF(1) has five subunits: alpha(3), beta(3), gamma(1), delta(1), epsilon(1). CF(0) has three main subunits: a(1), b(2) and c(9-12). The alpha and beta chains form an alternating ring which encloses part of the gamma chain. CF(1) is attached to CF(0) by a central stalk formed by the gamma and epsilon chains, while a peripheral stalk is formed by the delta and b chains.

It is found in the cell inner membrane. The enzyme catalyses ATP + H2O + 4 H(+)(in) = ADP + phosphate + 5 H(+)(out). Produces ATP from ADP in the presence of a proton gradient across the membrane. The catalytic sites are hosted primarily by the beta subunits. This chain is ATP synthase subunit beta, found in Rhizobium meliloti (strain 1021) (Ensifer meliloti).